Reading from the N-terminus, the 442-residue chain is Cell cycle checkpoint control protein RAD9B (442 aa).

Disordered regions lie at residues 370-392 (EVPE…TEDV) and 422-442 (QSLA…FSTF). Phosphoserine is present on Ser387.

The protein belongs to the rad9 family. Interacts with HUS1, HUS1B, RAD1, RAD9A and RAD17.

In Bos taurus (Bovine), this protein is Cell cycle checkpoint control protein RAD9B (RAD9B).